The following is a 291-amino-acid chain: ATP synthase gamma chain (291 aa).

This sequence belongs to the ATPase gamma chain family. As to quaternary structure, F-type ATPases have 2 components, CF(1) - the catalytic core - and CF(0) - the membrane proton channel. CF(1) has five subunits: alpha(3), beta(3), gamma(1), delta(1), epsilon(1). CF(0) has three main subunits: a, b and c.

The protein localises to the cell inner membrane. Produces ATP from ADP in the presence of a proton gradient across the membrane. The gamma chain is believed to be important in regulating ATPase activity and the flow of protons through the CF(0) complex. The sequence is that of ATP synthase gamma chain from Syntrophus aciditrophicus (strain SB).